Consider the following 429-residue polypeptide: GDP-fucose protein O-fucosyltransferase 2 (429 aa).

A signal peptide spans 1–21 (MATLSFVFLLLGAVSWPPASA). Position 53 to 57 (53 to 57 (PEGFN)) interacts with GDP-beta-L-fucose. The Proton acceptor role is filled by Glu54. Cys161 and Cys192 are oxidised to a cystine. Residues Asn189, Asn209, and Asn259 are each glycosylated (N-linked (GlcNAc...) asparagine). GDP-beta-L-fucose-binding positions include 292-294 (HLR), Asp371, and 388-389 (TF). Cys412 and Cys419 form a disulfide bridge.

The protein belongs to the glycosyltransferase 68 family. Isoform A is expressed in fetal liver and peripheral blood lymphocytes. Isoform B is expressed in spleen, lung, testis, bone marrow, thymus, pancreas, prostate, fetal brain, fetal liver and fetal kidney. Isoform C is expressed in brain, heart, spleen, liver, lung, stomach, testis, placenta, skin, thymus, pancreas, mammary gland, prostate, fetal brain, fetal liver and fetal heart.

It localises to the endoplasmic reticulum. Its subcellular location is the golgi apparatus. The catalysed reaction is L-seryl-[protein] + GDP-beta-L-fucose = 3-O-(alpha-L-fucosyl)-L-seryl-[protein] + GDP + H(+). It carries out the reaction L-threonyl-[protein] + GDP-beta-L-fucose = 3-O-(alpha-L-fucosyl)-L-threonyl-[protein] + GDP + H(+). It functions in the pathway protein modification; protein glycosylation. With respect to regulation, inhibited by EDTA and by Zn(2+). Catalyzes the reaction that attaches fucose through an O-glycosidic linkage to a conserved serine or threonine residue in the consensus sequence C1-X-X-S/T-C2 of thrombospondin type I repeats (TSRs) where C1 and C2 are the first and second cysteines of the repeat, respectively. O-fucosylates members of several protein families including the ADAMTS, the thrombospondin (TSP) and spondin families. Required for the proper secretion of ADAMTS family members such as ADAMTSL1 and ADAMTS13. The O-fucosylation of TSRs is also required for restricting epithelial to mesenchymal transition (EMT), maintaining the correct patterning of mesoderm and localization of the definite endoderm. This Homo sapiens (Human) protein is GDP-fucose protein O-fucosyltransferase 2 (POFUT2).